The sequence spans 312 residues: Olfactory receptor 2B8 (312 aa).

At 1 to 25 the chain is on the extracellular side; it reads MDQKNGSSFTGFILLGFSDRPQLEL. Asn5 is a glycosylation site (N-linked (GlcNAc...) asparagine). The helical transmembrane segment at 26 to 49 threads the bilayer; that stretch reads VLFVVLLIFYIFTLLGNKTIIVLS. Over 50 to 57 the chain is Cytoplasmic; the sequence is HLDPHLHT. A helical membrane pass occupies residues 58–79; sequence PMYFFFSNLSFLDLCYTTGIVP. Residues 80 to 100 are Extracellular-facing; that stretch reads QLLVNLRGADKSISYGGCVVQ. Residues Cys97 and Cys189 are joined by a disulfide bond. The helical transmembrane segment at 101–120 threads the bilayer; sequence LYISLGLGSTECVLLGVMVF. Over 121-139 the chain is Cytoplasmic; the sequence is DRYAAVCRPLHYTVVMHPC. The chain crosses the membrane as a helical span at residues 140-158; that stretch reads LYVLMASTSWVIGFANSLL. Residues 159 to 195 lie on the Extracellular side of the membrane; the sequence is QTVLILLLTLCGRNKLEHFLCEVPPLLKLACVDTTMN. Residue Asn195 is glycosylated (N-linked (GlcNAc...) asparagine). The helical transmembrane segment at 196–219 threads the bilayer; the sequence is ESELFFVSVIILLVPVALIIFSYS. Residues 220–236 are Cytoplasmic-facing; it reads QIVRAVMRIKLATGQRK. The chain crosses the membrane as a helical span at residues 237–259; sequence VFGTCGSHLTVVSLFYGTAIYAY. Residues 260 to 272 are Extracellular-facing; it reads LQPGNNYSQDQGK. Asn265 carries an N-linked (GlcNAc...) asparagine glycan. A helical transmembrane segment spans residues 273–292; it reads FISLFYTIITPMINPLIYTL. The Cytoplasmic segment spans residues 293–312; that stretch reads RNKDVKGALKKVLWKNYDSR.

It belongs to the G-protein coupled receptor 1 family.

The protein localises to the cell membrane. Functionally, odorant receptor. The sequence is that of Olfactory receptor 2B8 from Homo sapiens (Human).